Reading from the N-terminus, the 552-residue chain is MGSILSRRIAGVEDIDIQANSAYRYPPKSGNYFASHFFMGGEKFDTPHPEGYLFGENMDLNFLGSRPVQFPYVTPAPHEPVKTLRSLVNIRKDSLRLVRYKDDADSPTEDGDKPRVLYSLEFTFDADARVAITIYCQASEEFLNGRAVYSPKSPSLQSETVHYKRGVSQQFSLPSFKIDFSEWKDDELNFDLDRGVFPVVIQAVVDEGDVVEVTGHAHVLLAAFEKHMDGSFSVKPLKQKQIVDRVSYLLQEIYGIENKNNQETKPSDDENSDNSNECVVCLSDLRDTLILPCRHLCLCTSCADTLRYQANNCPICRLPFRALLQIRAVRKKPGALSPVSFSPVLAQSLEHDEHSCPFKKSKPHPASLASKKPKRETNSDSVPPGYEPISLLEALNGLRAVSPAIPSAPLYEEITYSGISDGLSQASCPLAAIDHILDSSRQKGRPQSKAPDSTLRSPSSPIHEEDEEKLSEDVDAPPPLGGAELALRESSSPESFITEEVDESSSPQQGTRAASIENVLQDSSPEHCGRGPPADIYLPALGPDSCSVGIDE.

Gly-2 carries the N-myristoyl glycine lipid modification. Residues 278–317 (CVVCLSDLRDTLILPCRHLCLCTSCADTLRYQANNCPICR) form an RING-type zinc finger. Residues 355–384 (SCPFKKSKPHPASLASKKPKRETNSDSVPP) form a disordered region. A Required for TSG101-binding motif is present at residues 406–409 (PSAP). At Tyr-411 the chain carries Phosphotyrosine. A disordered region spans residues 439-552 (SSRQKGRPQS…PDSCSVGIDE (114 aa)). The span at 450 to 460 (APDSTLRSPSS) shows a compositional bias: polar residues. A compositionally biased stretch (acidic residues) spans 464 to 475 (EEDEEKLSEDVD). A Phosphoserine modification is found at Ser-471. The span at 504-523 (SSSPQQGTRAASIENVLQDS) shows a compositional bias: polar residues. Ser-524 bears the Phosphoserine mark.

In terms of assembly, interacts with MC1R and MC4R, but not with TBXA2R. Interacts with TSG101. Interacts with mislocalized cytosolically exposed PRNP; this interaction alters MGRN1 subcellular location and causes lysosomal enlargement. Post-translationally, autoubiquitinated in vitro.

The protein localises to the early endosome. The protein resides in the cytoplasm. It is found in the cytosol. Its subcellular location is the nucleus. It localises to the cell membrane. The catalysed reaction is S-ubiquitinyl-[E2 ubiquitin-conjugating enzyme]-L-cysteine + [acceptor protein]-L-lysine = [E2 ubiquitin-conjugating enzyme]-L-cysteine + N(6)-ubiquitinyl-[acceptor protein]-L-lysine.. Its pathway is protein modification; protein ubiquitination. Functionally, E3 ubiquitin-protein ligase. Mediates monoubiquitination at multiple sites of TSG101 in the presence of UBE2D1, but not of UBE2G1, nor UBE2H. Plays a role in the regulation of endosome-to-lysosome trafficking. Impairs MC1R- and MC4R-signaling by competing with GNAS-binding to MCRs and inhibiting agonist-induced cAMP production. Does not inhibit ADRB2-signaling. Does not promote MC1R ubiquitination. Acts also as a negative regulator of hedgehog signaling. This is E3 ubiquitin-protein ligase MGRN1 (MGRN1) from Homo sapiens (Human).